A 590-amino-acid chain; its full sequence is ATP-dependent zinc metalloprotease FtsH 1 (590 aa).

At 1–8 (MLKLTKKQ) the chain is on the cytoplasmic side. A helical membrane pass occupies residues 9-29 (LIIVLGIAIVVVSAIGYAVYT). Residues 30–103 (QYFNEDKLEI…QVRETTDQYS (74 aa)) lie on the Extracellular side of the membrane. A helical membrane pass occupies residues 104 to 124 (VVQVITFVVLIGGFIGVAIFL). Residues 125 to 590 (SKKNATQTSK…NEIFSGFQSM (466 aa)) are Cytoplasmic-facing. 195–202 (GSPGTGKT) lines the ATP pocket. His-418 serves as a coordination point for Zn(2+). Residue Glu-419 is part of the active site. Zn(2+)-binding residues include His-422 and Asp-496.

In the central section; belongs to the AAA ATPase family. It in the C-terminal section; belongs to the peptidase M41 family. As to quaternary structure, homohexamer. The cofactor is Zn(2+).

It is found in the cell membrane. In terms of biological role, acts as a processive, ATP-dependent zinc metallopeptidase for both cytoplasmic and membrane proteins. Plays a role in the quality control of integral membrane proteins. The sequence is that of ATP-dependent zinc metalloprotease FtsH 1 from Alkaliphilus metalliredigens (strain QYMF).